A 176-amino-acid chain; its full sequence is Large ribosomal subunit protein uL5 (176 aa).

It belongs to the universal ribosomal protein uL5 family. Part of the 50S ribosomal subunit; contacts the 5S rRNA and probably tRNA. Forms a bridge to the 30S subunit in the 70S ribosome.

Functionally, this is one of the proteins that bind and probably mediate the attachment of the 5S RNA into the large ribosomal subunit, where it forms part of the central protuberance. In the 70S ribosome it contacts protein S13 of the 30S subunit (bridge B1b), connecting the 2 subunits; this bridge is implicated in subunit movement. May contact the P site tRNA; the 5S rRNA and some of its associated proteins might help stabilize positioning of ribosome-bound tRNAs. This chain is Large ribosomal subunit protein uL5, found in Picrophilus torridus (strain ATCC 700027 / DSM 9790 / JCM 10055 / NBRC 100828 / KAW 2/3).